A 382-amino-acid chain; its full sequence is UDP-4-amino-4-deoxy-L-arabinose--oxoglutarate aminotransferase (382 aa).

Lys-182 is modified (N6-(pyridoxal phosphate)lysine).

Belongs to the DegT/DnrJ/EryC1 family. ArnB subfamily. Homodimer. Pyridoxal 5'-phosphate serves as cofactor.

It catalyses the reaction UDP-4-amino-4-deoxy-beta-L-arabinose + 2-oxoglutarate = UDP-beta-L-threo-pentopyranos-4-ulose + L-glutamate. Its pathway is nucleotide-sugar biosynthesis; UDP-4-deoxy-4-formamido-beta-L-arabinose biosynthesis; UDP-4-deoxy-4-formamido-beta-L-arabinose from UDP-alpha-D-glucuronate: step 2/3. It participates in bacterial outer membrane biogenesis; lipopolysaccharide biosynthesis. Its function is as follows. Catalyzes the conversion of UDP-4-keto-arabinose (UDP-Ara4O) to UDP-4-amino-4-deoxy-L-arabinose (UDP-L-Ara4N). The modified arabinose is attached to lipid A and is required for resistance to polymyxin and cationic antimicrobial peptides. This Pectobacterium atrosepticum (strain SCRI 1043 / ATCC BAA-672) (Erwinia carotovora subsp. atroseptica) protein is UDP-4-amino-4-deoxy-L-arabinose--oxoglutarate aminotransferase.